The sequence spans 532 residues: tRNA-2-methylthio-N(6)-dimethylallyladenosine synthase (532 aa).

A disordered region spans residues 1 to 21; the sequence is MTSTVAHGAGSAGPADDVEPM. In terms of domain architecture, MTTase N-terminal spans 24-140; it reads RTYQVRTYGC…LPALLDRARH (117 aa). [4Fe-4S] cluster-binding residues include Cys-33, Cys-69, Cys-103, Cys-177, Cys-181, and Cys-184. The Radical SAM core domain maps to 163 to 399; sequence RESAYAAWVS…VELQEQISLE (237 aa). The region spanning 402–470 is the TRAM domain; sequence RAIVGQRVEL…PHHLIADGGI (69 aa). Residues 510 to 532 form a disordered region; sequence TSCGSAGGCGSADGAGSSAGDPQ. Over residues 523-532 the composition is skewed to low complexity; it reads GAGSSAGDPQ.

The protein belongs to the methylthiotransferase family. MiaB subfamily. Monomer. It depends on [4Fe-4S] cluster as a cofactor.

The protein resides in the cytoplasm. The catalysed reaction is N(6)-dimethylallyladenosine(37) in tRNA + (sulfur carrier)-SH + AH2 + 2 S-adenosyl-L-methionine = 2-methylsulfanyl-N(6)-dimethylallyladenosine(37) in tRNA + (sulfur carrier)-H + 5'-deoxyadenosine + L-methionine + A + S-adenosyl-L-homocysteine + 2 H(+). Catalyzes the methylthiolation of N6-(dimethylallyl)adenosine (i(6)A), leading to the formation of 2-methylthio-N6-(dimethylallyl)adenosine (ms(2)i(6)A) at position 37 in tRNAs that read codons beginning with uridine. This is tRNA-2-methylthio-N(6)-dimethylallyladenosine synthase from Mycobacterium ulcerans (strain Agy99).